The primary structure comprises 154 residues: Large ribosomal subunit protein uL13 (154 aa).

This sequence belongs to the universal ribosomal protein uL13 family. In terms of assembly, part of the 50S ribosomal subunit.

Functionally, this protein is one of the early assembly proteins of the 50S ribosomal subunit, although it is not seen to bind rRNA by itself. It is important during the early stages of 50S assembly. In Allorhizobium ampelinum (strain ATCC BAA-846 / DSM 112012 / S4) (Agrobacterium vitis (strain S4)), this protein is Large ribosomal subunit protein uL13.